A 536-amino-acid chain; its full sequence is Organic anion transporter 3 (536 aa).

Over 1–11 (MTFSEILDRVG) the chain is Cytoplasmic. Ser-4 carries the phosphoserine modification. Residues 12–32 (SMGPFQYLHVTLLALPVLGIA) form a helical membrane-spanning segment. The Extracellular portion of the chain corresponds to 33–123 (NHNLLQIFTA…LVCSSNKLKE (91 aa)). 2 N-linked (GlcNAc...) asparagine glycosylation sites follow: Asn-81 and Asn-86. A helical transmembrane segment spans residues 124–144 (MAQSIFMAGILVGGPVIGELS). Over 145-158 (DRFGRKPILTWSYL) the chain is Cytoplasmic. The chain crosses the membrane as a helical span at residues 159–179 (MLAASGSGAAFSPSLPVYMIF). Residue Arg-180 is a topological domain, extracellular. Residues 181–201 (FLCGCSISGISLSTVILNVEW) traverse the membrane as a helical segment. Topologically, residues 202 to 212 (VPTSMRAISST) are cytoplasmic. The chain crosses the membrane as a helical span at residues 213 to 233 (SIGYCYTIGQFILSGLAYAIP). The Extracellular segment spans residues 234-236 (QWR). The helical transmembrane segment at 237 to 257 (WLQLTSSAPFFIFSLLSWWVP) threads the bilayer. Residues 258–327 (ESIRWLVLSG…FRVSILRRVT (70 aa)) are Cytoplasmic-facing. Residues 328-348 (FCLSLAWFSTGFAYYSLAMGV) form a helical membrane-spanning segment. At 349–354 (EEFGVN) the chain is on the extracellular side. The chain crosses the membrane as a helical span at residues 355-375 (IYILQIIFGGVDIPAKFITIL). The Cytoplasmic portion of the chain corresponds to 376–383 (SLSYLGRR). The chain crosses the membrane as a helical span at residues 384–404 (ITQSFLLLLAGGAILALIFVP). At 405 to 411 (SEMQLLR) the chain is on the extracellular side. The helical transmembrane segment at 412–432 (TALAVFGKGCLSGSFSCLFLY) threads the bilayer. Residues 433–471 (TSELYPTVLRQTGMGISNVWARVGSMIAPLVKITGELQP) are Cytoplasmic-facing. The chain crosses the membrane as a helical span at residues 472 to 492 (FIPNVIFGTTALLGGSAAFFL). Residues 493-536 (LETLNRPLPETIEDIQNWHKQVQKTKQESEAEKASQIIPLKTGG) lie on the Extracellular side of the membrane. A disordered region spans residues 515–536 (QKTKQESEAEKASQIIPLKTGG).

The protein belongs to the major facilitator (TC 2.A.1) superfamily. Organic cation transporter (TC 2.A.1.19) family. As to expression, expressed in the liver, brain, kidney, choroid plexus and weakly in the eye. Moderately expressed (at protein level) in the brain capillary endothelial cells (BCEC).

The protein resides in the basolateral cell membrane. It catalyses the reaction estrone 3-sulfate(out) + glutarate(in) = estrone 3-sulfate(in) + glutarate(out). The enzyme catalyses estrone 3-sulfate(in) + 2-oxoglutarate(out) = estrone 3-sulfate(out) + 2-oxoglutarate(in). The catalysed reaction is glutarate(in) + 2-oxoglutarate(out) = glutarate(out) + 2-oxoglutarate(in). It carries out the reaction urate(in) + 2-oxoglutarate(out) = urate(out) + 2-oxoglutarate(in). It catalyses the reaction taurocholate(out) + glutarate(in) = taurocholate(in) + glutarate(out). The enzyme catalyses dehydroepiandrosterone 3-sulfate(out) + glutarate(in) = dehydroepiandrosterone 3-sulfate(in) + glutarate(out). The catalysed reaction is prostaglandin F2alpha(out) + glutarate(in) = prostaglandin F2alpha(in) + glutarate(out). It carries out the reaction prostaglandin F2alpha(out) + 2-oxoglutarate(in) = prostaglandin F2alpha(in) + 2-oxoglutarate(out). It catalyses the reaction (R)-carnitine(out) + 2-oxoglutarate(in) = (R)-carnitine(in) + 2-oxoglutarate(out). The enzyme catalyses glutarate(in) + (R)-carnitine(out) = glutarate(out) + (R)-carnitine(in). The catalysed reaction is prostaglandin E2(out) + 2-oxoglutarate(in) = prostaglandin E2(in) + 2-oxoglutarate(out). It carries out the reaction prostaglandin E2(out) + glutarate(in) = prostaglandin E2(in) + glutarate(out). It catalyses the reaction urate(in) + glutarate(out) = urate(out) + glutarate(in). The enzyme catalyses taurocholate(out) + 2-oxoglutarate(in) = taurocholate(in) + 2-oxoglutarate(out). The catalysed reaction is dehydroepiandrosterone 3-sulfate(out) + 2-oxoglutarate(in) = dehydroepiandrosterone 3-sulfate(in) + 2-oxoglutarate(out). It carries out the reaction kynurenate(out) + a dicarboxylate(in) = kynurenate(in) + a dicarboxylate(out). It catalyses the reaction (indol-3-yl)acetate(out) + a dicarboxylate(in) = (indol-3-yl)acetate(in) + a dicarboxylate(out). The enzyme catalyses indoxyl sulfate(out) + a dicarboxylate(in) = indoxyl sulfate(in) + a dicarboxylate(out). The catalysed reaction is N-benzoylglycine(out) + a dicarboxylate(in) = N-benzoylglycine(in) + a dicarboxylate(out). It carries out the reaction 3-carboxy-4-methyl-5-propyl-2-furanpropanoate(out) + a dicarboxylate(in) = 3-carboxy-4-methyl-5-propyl-2-furanpropanoate(in) + a dicarboxylate(out). It catalyses the reaction (6R)-L-erythro-5,6,7,8-tetrahydrobiopterin(out) + a dicarboxylate(in) = (6R)-L-erythro-5,6,7,8-tetrahydrobiopterin(in) + a dicarboxylate(out). The enzyme catalyses L-erythro-7,8-dihydrobiopterin(out) + a dicarboxylate(in) = L-erythro-7,8-dihydrobiopterin(in) + a dicarboxylate(out). The catalysed reaction is L-sepiapterin(out) + a dicarboxylate(in) = L-sepiapterin(in) + a dicarboxylate(out). Functions as an organic anion/dicarboxylate exchanger that couples organic anion uptake indirectly to the sodium gradient. Transports organic anions such as estrone 3-sulfate (E1S) and urate in exchange for dicarboxylates such as glutarate or ketoglutarate (2-oxoglutarate). Plays an important role in the excretion of endogenous and exogenous organic anions, especially from the kidney and the brain. E1S transport is pH- and chloride-dependent and may also involve E1S/cGMP exchange. Responsible for the transport of prostaglandin E2 (PGE2) and prostaglandin F2(alpha) (PGF2(alpha)) in the basolateral side of the renal tubule. Involved in the transport of neuroactive tryptophan metabolites kynurenate and xanthurenate. Functions as a biopterin transporters involved in the uptake and the secretion of coenzymes tetrahydrobiopterin (BH4), dihydrobiopterin (BH2) and sepiapterin to urine, thereby determining baseline levels of blood biopterins. May be involved in the basolateral transport of steviol, a metabolite of the popular sugar substitute stevioside. May participate in the detoxification/ renal excretion of drugs and xenobiotics, such as the histamine H(2)-receptor antagonists fexofenadine and cimetidine, the antibiotic benzylpenicillin (PCG), the anionic herbicide 2,4-dichloro-phenoxyacetate (2,4-D), the diagnostic agent p-aminohippurate (PAH), the antiviral acyclovir (ACV), and the mycotoxin ochratoxin (OTA), by transporting these exogenous organic anions across the cell membrane in exchange for dicarboxylates such as 2-oxoglutarate. Contributes to the renal uptake of potent uremic toxins (indoxyl sulfate (IS), indole acetate (IA), hippurate/N-benzoylglycine (HA) and 3-carboxy-4-methyl-5-propyl-2-furanpropionate (CMPF)), pravastatin, PCG, E1S and dehydroepiandrosterone sulfate (DHEAS), and is partly involved in the renal uptake of temocaprilat (an angiotensin-converting enzyme (ACE) inhibitor). May contribute to the release of cortisol in the adrenals. Involved in one of the detoxification systems on the choroid plexus (CP), removes substrates such as E1S or taurocholate (TC), PCG, 2,4-D and PAH, from the cerebrospinal fluid (CSF) to the blood for eventual excretion in urine and bile. Regulates the CSF concentration of histamine H(2)-receptor antagonists cimetidine and ranitidine at the CP. Also contributes to the uptake of several other organic compounds such as the prostanoids prostaglandin E(2) and prostaglandin F(2-alpha), L-carnitine, and the therapeutic drugs allopurinol, 6-mercaptopurine (6-MP) and 5-fluorouracil (5-FU). Mediates the uptake from brain of organic anions, such as E1S, PAH, and OTA. Mediates the transport of PAH, PCG, and the statins pravastatin and pitavastatin, from the cerebrum into the blood circulation across the blood-brain barrier (BBB). In summary, plays a role in the efflux of drugs and xenobiotics, helping reduce their undesired toxicological effects on the body. In Rattus norvegicus (Rat), this protein is Organic anion transporter 3 (Slc22a8).